Reading from the N-terminus, the 657-residue chain is Serine/threonine-protein kinase BUR1 (657 aa).

Residues 60–366 enclose the Protein kinase domain; the sequence is YREDEKLGQG…AMSAKHHPWF (307 aa). ATP-binding positions include 66-74 and Lys89; that span reads LGQGTFGEV. The active-site Proton acceptor is Asp195. The residue at position 240 (Thr240) is a Phosphothreonine; by CAK. Ser400 carries the phosphoserine modification. Position 405 is a phosphothreonine (Thr405). Residues 414–657 form a disordered region; the sequence is KGESPVVKNL…FQNSDIADLY (244 aa). At Ser417 the chain carries Phosphoserine. Residues 489–501 show a composition bias toward low complexity; the sequence is NNSSRNNRFSGNS. Composition is skewed to polar residues over residues 535–552, 564–595, and 614–625; these read SRYQGNSNESRYKNSPND, PETNFNRQPQKYSRQESNAPINKNYNPSNGSR, and ISPSQGQHQLTS. The span at 627 to 649 shows a compositional bias: basic and acidic residues; sequence PIEKKNGSFKDERAKPDESKEFQ. Ser634 is subject to Phosphoserine.

The protein belongs to the protein kinase superfamily. CMGC Ser/Thr protein kinase family. CDC2/CDKX subfamily. Belongs to the BUR kinase complex composed of SGV1/BUR1 and BUR2. Interacts with BUR2 and RBP1.

It localises to the nucleus. It carries out the reaction L-seryl-[protein] + ATP = O-phospho-L-seryl-[protein] + ADP + H(+). The catalysed reaction is L-threonyl-[protein] + ATP = O-phospho-L-threonyl-[protein] + ADP + H(+). It catalyses the reaction [DNA-directed RNA polymerase] + ATP = phospho-[DNA-directed RNA polymerase] + ADP + H(+). Functionally, serine/threonine-protein kinase component of the BUR kinase complex involved in transcription regulation. This complex phosphorylates 'Ser-120' of the UBC2/RAD6 ubiquitin-conjugating enzyme (E2), leading to monoubiquitination of histone H2B, the localization of the PAF1 complex to the chromatin, and the silencing of telomeric-associated genes. Also required for histone H3 'Lys-4' trimethylation. May phosphorylate the 'Ser-5' of the RBP1 carboxy-terminal domain (CTD) repeats. Necessary for the recovery from pheromone-induced growth arrest in the cell cycle G1 phase. The kinase activity of the complex requires the presence of BUR2. The protein is Serine/threonine-protein kinase BUR1 (SGV1) of Saccharomyces cerevisiae (strain ATCC 204508 / S288c) (Baker's yeast).